The chain runs to 370 residues: MDAEIKHRNSDKTFKFVTPPADSSIEVLNDFYWTDTDEPHVARRKMILQKYPEVTKLTGHEPKTKWYVMGVVLLQLGIAYYLRHTPVFSWKFLTLAYVIGATANQAIFLAIHELSHNLLFRKPLHNKLFAVFANIPIGVPYSASFQPYHQLHHKFLGDMYLDTDLPTEYEGRFLSSMPGKLFFAIFQIFFYALRPMFITQIKFTYVHLVNVVFQLIFDHVMVTCWGWKALGYFIVSTFLAGSLHPCAGHFIAEHYVLNENNVPRHQKIGGTNISKELLPAETYSYYGTLNMLTWNVGYHNEHHDFPYIAWTRLPELRRIAAEFYDPLPQVTSWCGVIWWFIFNDVNTVWNRVKREGKEKHGYRINRLDEN.

A run of 3 helical transmembrane segments spans residues 68 to 88 (VMGV…TPVF), 92 to 112 (FLTL…LAIH), and 128 to 148 (LFAV…FQPY). The short motif at 112 to 116 (HELSH) is the Histidine box-1 element. Positions 149–153 (HQLHH) match the Histidine box-2 motif. 3 helical membrane passes run 173-193 (FLSS…FYAL), 197-217 (FITQ…QLIF), and 220-240 (VMVT…TFLA). The short motif at 299–303 (HNEHH) is the Histidine box-3 element.

It belongs to the fatty acid desaturase type 1 family. DEGS subfamily.

It localises to the membrane. It carries out the reaction an N-acylsphinganine + 2 Fe(II)-[cytochrome b5] + O2 + 2 H(+) = an N-acylsphing-4-enine + 2 Fe(III)-[cytochrome b5] + 2 H2O. It functions in the pathway lipid metabolism; sphingolipid metabolism. In terms of biological role, delta(4)-fatty-acid desaturase which introduces a double bond at the 4-position in the long-chain base (LCB) of ceramides. Required for the formation of the monounsaturated sphingoid base (E)-sphing-4-enine during glucosylceramide (GluCer) biosynthesis. The protein is Sphingolipid delta(4)-desaturase of Candida albicans (strain SC5314 / ATCC MYA-2876) (Yeast).